The primary structure comprises 471 residues: Extracellular endo-alpha-(1-&gt;5)-L-arabinanase (471 aa).

Residues 1-19 (MRFLFLMITLTALTGYILA) form the signal peptide. Catalysis depends on Asp32, which acts as the Proton acceptor. Residues Asp32, Gly117, 167-170 (NALD), 187-189 (SWF), and 219-223 (HSSME) contribute to the substrate site. The Proton donor role is filled by Glu223. Ca(2+) is bound at residue His314.

Belongs to the glycosyl hydrolase 43 family. In terms of assembly, monomer. The cofactor is Ca(2+).

The protein localises to the secreted. It carries out the reaction Endohydrolysis of (1-&gt;5)-alpha-arabinofuranosidic linkages in (1-&gt;5)-arabinans.. It participates in glycan metabolism; L-arabinan degradation. Involved in the degradation of arabinan and is a key enzyme in the complete degradation of the plant cell wall. Catalyzes the internal cleavage of alpha-(1-&gt;5)-L-arabinofuranosyl residues in different arabinan-containing polysaccharides, and releases arabinotriose and arabinobiose as end products. It acts on branched arabinan (from sugar beet), but more slowly when compared to linear or debranched arabinan. The sequence is that of Extracellular endo-alpha-(1-&gt;5)-L-arabinanase from Thermotoga petrophila (strain ATCC BAA-488 / DSM 13995 / JCM 10881 / RKU-1).